A 347-amino-acid polypeptide reads, in one-letter code: NADH-ubiquinone oxidoreductase chain 2 (347 aa).

The next 11 helical transmembrane spans lie at 5–22 (ILIT…IVLF), 26–45 (WFMI…PILM), 60–80 (FLTQ…NLLC), 96–116 (TMIT…FWVP), 122–142 (ISLS…LSIL), 153–173 (LLLM…LNQT), 178–198 (ILAY…VYNP), 200–220 (LAIL…MLFM), 237–257 (FPLM…LPPL), 274–294 (DMII…YFYT), and 325–345 (LLAP…MLAA).

It belongs to the complex I subunit 2 family. Core subunit of respiratory chain NADH dehydrogenase (Complex I) which is composed of 45 different subunits. Interacts with TMEM242.

Its subcellular location is the mitochondrion inner membrane. The enzyme catalyses a ubiquinone + NADH + 5 H(+)(in) = a ubiquinol + NAD(+) + 4 H(+)(out). In terms of biological role, core subunit of the mitochondrial membrane respiratory chain NADH dehydrogenase (Complex I) which catalyzes electron transfer from NADH through the respiratory chain, using ubiquinone as an electron acceptor. Essential for the catalytic activity and assembly of complex I. The sequence is that of NADH-ubiquinone oxidoreductase chain 2 from Ailuropoda melanoleuca (Giant panda).